The following is a 58-amino-acid chain: uncharacterized protein (58 aa).

This is an uncharacterized protein from Methanocaldococcus jannaschii (strain ATCC 43067 / DSM 2661 / JAL-1 / JCM 10045 / NBRC 100440) (Methanococcus jannaschii).